Reading from the N-terminus, the 447-residue chain is UDP-N-acetylmuramate--L-alanine ligase (447 aa).

Residue Gly108 to Ser114 coordinates ATP.

The protein belongs to the MurCDEF family.

It is found in the cytoplasm. The catalysed reaction is UDP-N-acetyl-alpha-D-muramate + L-alanine + ATP = UDP-N-acetyl-alpha-D-muramoyl-L-alanine + ADP + phosphate + H(+). The protein operates within cell wall biogenesis; peptidoglycan biosynthesis. In terms of biological role, cell wall formation. The polypeptide is UDP-N-acetylmuramate--L-alanine ligase (Listeria monocytogenes serotype 4a (strain HCC23)).